Here is a 150-residue protein sequence, read N- to C-terminus: MKAVIQRVSEATVRVDGKKVGSIERGVLVLLGVEKGDETRNADWLAEKIVNLRIFEDDGGKMNLSLMDIKGELLSVSQFTLAGNCSKGRRPSFDTAAPPEDANHLYQYFNGKIWEMGIPVQSGIFQADMKVSLINDGPVTFILETPKREP.

The short motif at 137-138 (GP) is the Gly-cisPro motif, important for rejection of L-amino acids element.

This sequence belongs to the DTD family. As to quaternary structure, homodimer.

It is found in the cytoplasm. It carries out the reaction glycyl-tRNA(Ala) + H2O = tRNA(Ala) + glycine + H(+). The catalysed reaction is a D-aminoacyl-tRNA + H2O = a tRNA + a D-alpha-amino acid + H(+). Its function is as follows. An aminoacyl-tRNA editing enzyme that deacylates mischarged D-aminoacyl-tRNAs. Also deacylates mischarged glycyl-tRNA(Ala), protecting cells against glycine mischarging by AlaRS. Acts via tRNA-based rather than protein-based catalysis; rejects L-amino acids rather than detecting D-amino acids in the active site. By recycling D-aminoacyl-tRNA to D-amino acids and free tRNA molecules, this enzyme counteracts the toxicity associated with the formation of D-aminoacyl-tRNA entities in vivo and helps enforce protein L-homochirality. This chain is D-aminoacyl-tRNA deacylase, found in Geotalea daltonii (strain DSM 22248 / JCM 15807 / FRC-32) (Geobacter daltonii).